Consider the following 208-residue polypeptide: A-type ATP synthase subunit E (208 aa).

Positions 37-57 are disordered; that stretch reads DAEKTAEAEKNKILDNGKKQS.

It belongs to the V-ATPase E subunit family. In terms of assembly, has multiple subunits with at least A(3), B(3), C, D, E, F, H, I and proteolipid K(x).

It is found in the cell membrane. Component of the A-type ATP synthase that produces ATP from ADP in the presence of a proton gradient across the membrane. The chain is A-type ATP synthase subunit E from Methanobrevibacter smithii (strain ATCC 35061 / DSM 861 / OCM 144 / PS).